The following is a 303-amino-acid chain: Probable cell division protein WhiA (303 aa).

Residues 272–303 (SIQQLADSLSTPLTKSGVNHRLRKINKIADEL) constitute a DNA-binding region (H-T-H motif).

The protein belongs to the WhiA family.

Involved in cell division and chromosome segregation. The sequence is that of Probable cell division protein WhiA from Streptococcus pneumoniae serotype 4 (strain ATCC BAA-334 / TIGR4).